Consider the following 305-residue polypeptide: MSTDKKQSNFAIDFLMGGVSAAVSKTAAAPIERVKLLIQNQDEMIKQGSLDRRYTGIVECFKRTAADEGVASFWRGNTANVIRYFPTQALNFAFKDKIKAMFGFKKEEGYAKWFAGNLASGGLAGGLSLLFVYSLDYARTRLAADSKSAKKGGERQFNGLVDVYKKTLASDGVAGLYRGFLPSVVGIVVYRGLYFGLYDSLKPLLLTGSLENSFLASFLLGWAVTTGASTASYPLDTVRRRMMMTSGQAVKYDGAFDAFRKIVAAEGIKSLFKGCGANILRGVAGAGVISMYDQLQVILFGKTFK.

Solcar repeat units lie at residues 8-101, 112-204, and 212-298; these read SNFA…IKAM, KWFA…LKPL, and NSFL…LQVI. A run of 5 helical transmembrane segments spans residues 10–37, 78–102, 110–130, 180–201, and 215–235; these read FAID…VKLL, TANV…KAMF, YAKW…LSLL, FLPS…YDSL, and LASF…SYPL. Positions 83 and 95 each coordinate ADP. Arg-239 contacts ADP. Residues 239–244 form an important for transport activity region; it reads RRRMMM. The Nucleotide carrier signature motif signature appears at 239 to 244; that stretch reads RRRMMM. A helical membrane pass occupies residues 275–295; it reads CGANILRGVAGAGVISMYDQL.

It belongs to the mitochondrial carrier (TC 2.A.29) family. In terms of assembly, monomer.

Its subcellular location is the mitochondrion inner membrane. It catalyses the reaction ADP(in) + ATP(out) = ADP(out) + ATP(in). Its activity is regulated as follows. The matrix-open state (m-state) is inhibited by the membrane-permeable bongkrekic acid (BKA). The cytoplasmic-open state (c-state) is inhibited by the membrane-impermeable toxic inhibitor carboxyatractyloside (CATR). In terms of biological role, ADP:ATP antiporter that mediates import of ADP into the mitochondrial matrix for ATP synthesis, and export of ATP out to fuel the cell. Cycles between the cytoplasmic-open state (c-state) and the matrix-open state (m-state): operates by the alternating access mechanism with a single substrate-binding site intermittently exposed to either the cytosolic (c-state) or matrix (m-state) side of the inner mitochondrial membrane. The protein is ADP,ATP carrier protein (AAC) of Kluyveromyces lactis (strain ATCC 8585 / CBS 2359 / DSM 70799 / NBRC 1267 / NRRL Y-1140 / WM37) (Yeast).